Reading from the N-terminus, the 353-residue chain is MTAILERRESESLWGRFCNWITSTENRLYIGWFGVLMIPTLLTATSVFIIAFIAAPPVDIDGIREPVSGSLLYGNNIISGAIIPTSAAIGLHFYPIWEAASVDEWLYNGGPYELIVLHFLLGVACYMGREWELSFRLGMRPWIAVAYSAPVAAATAVFLIYPIGQGSFSDGMPLGISGTFNFMIVFQAEHNILMHPFHMLGVAGVFGGSLFSAMHGSLVTSSLIRETTENESANEGYRLGQEEETYNIVAAHGYFGRLIFQYASFNNSRSLHFFLAAWPVVGIWFTALGISTMAFNLNGFNFNQSVVDSQGRVINTWADIINRANLGMEVMHERNAHNLPLDLAAIEAPSTNG.

At Thr-2 the chain carries N-acetylthreonine. Phosphothreonine is present on Thr-2. 3 helical membrane-spanning segments follow: residues 29–46 (YIGWFGVLMIPTLLTATS), 118–133 (HFLLGVACYMGREWEL), and 142–156 (WIAVAYSAPVAAATA). His-118 contacts chlorophyll a. Position 126 (Tyr-126) interacts with pheophytin a. 2 residues coordinate [CaMn4O5] cluster: Asp-170 and Glu-189. A helical transmembrane segment spans residues 197–218 (FHMLGVAGVFGGSLFSAMHGSL). His-198 serves as a coordination point for chlorophyll a. A quinone contacts are provided by residues His-215 and 264 to 265 (SF). His-215 is a Fe cation binding site. A Fe cation-binding site is contributed by His-272. A helical membrane pass occupies residues 274–288 (FLAAWPVVGIWFTAL). [CaMn4O5] cluster-binding residues include His-332, Glu-333, Asp-342, and Ala-344. Positions 345-353 (AIEAPSTNG) are excised as a propeptide.

This sequence belongs to the reaction center PufL/M/PsbA/D family. As to quaternary structure, PSII is composed of 1 copy each of membrane proteins PsbA, PsbB, PsbC, PsbD, PsbE, PsbF, PsbH, PsbI, PsbJ, PsbK, PsbL, PsbM, PsbT, PsbX, PsbY, PsbZ, Psb30/Ycf12, at least 3 peripheral proteins of the oxygen-evolving complex and a large number of cofactors. It forms dimeric complexes. The cofactor is The D1/D2 heterodimer binds P680, chlorophylls that are the primary electron donor of PSII, and subsequent electron acceptors. It shares a non-heme iron and each subunit binds pheophytin, quinone, additional chlorophylls, carotenoids and lipids. D1 provides most of the ligands for the Mn4-Ca-O5 cluster of the oxygen-evolving complex (OEC). There is also a Cl(-1) ion associated with D1 and D2, which is required for oxygen evolution. The PSII complex binds additional chlorophylls, carotenoids and specific lipids.. In terms of processing, tyr-161 forms a radical intermediate that is referred to as redox-active TyrZ, YZ or Y-Z. Post-translationally, C-terminally processed by CTPA; processing is essential to allow assembly of the oxygen-evolving complex and thus photosynthetic growth.

It localises to the plastid. The protein localises to the chloroplast thylakoid membrane. The catalysed reaction is 2 a plastoquinone + 4 hnu + 2 H2O = 2 a plastoquinol + O2. Functionally, photosystem II (PSII) is a light-driven water:plastoquinone oxidoreductase that uses light energy to abstract electrons from H(2)O, generating O(2) and a proton gradient subsequently used for ATP formation. It consists of a core antenna complex that captures photons, and an electron transfer chain that converts photonic excitation into a charge separation. The D1/D2 (PsbA/PsbD) reaction center heterodimer binds P680, the primary electron donor of PSII as well as several subsequent electron acceptors. The sequence is that of Photosystem II protein D1 from Gossypium barbadense (Sea Island cotton).